The primary structure comprises 210 residues: tRNA (guanine-N(7)-)-methyltransferase (210 aa).

Glu43, Glu68, Asp95, and Asp117 together coordinate S-adenosyl-L-methionine. The active site involves Asp117. Substrate is bound by residues Lys121, Asp153, and 190–193; that span reads TEYE.

It belongs to the class I-like SAM-binding methyltransferase superfamily. TrmB family.

The enzyme catalyses guanosine(46) in tRNA + S-adenosyl-L-methionine = N(7)-methylguanosine(46) in tRNA + S-adenosyl-L-homocysteine. It functions in the pathway tRNA modification; N(7)-methylguanine-tRNA biosynthesis. Catalyzes the formation of N(7)-methylguanine at position 46 (m7G46) in tRNA. This Macrococcus caseolyticus (strain JCSC5402) (Macrococcoides caseolyticum) protein is tRNA (guanine-N(7)-)-methyltransferase.